The primary structure comprises 313 residues: Type II restriction enzyme BsuMI component YdiR (313 aa).

Positions 289-313 (FVSGDIVDENATTSSDDLPEDFENN) are disordered.

BsuMI restriction activity requires YdiR, YdiS and YdjA.

The enzyme catalyses Endonucleolytic cleavage of DNA to give specific double-stranded fragments with terminal 5'-phosphates.. A P subtype restriction enzyme that recognizes the double-stranded sequence 5'-CTCGAG-3'; the cleavage site is unknown. In Bacillus subtilis (strain 168), this protein is Type II restriction enzyme BsuMI component YdiR (ydiR).